Reading from the N-terminus, the 572-residue chain is Phenylalanine--tRNA ligase beta subunit (572 aa).

Residues 285–363 enclose the B5 domain; that stretch reads LSTTTKTVSH…RAFGFNELEP (79 aa). The Mg(2+) site is built by D341, D347, D350, and D351.

The protein belongs to the phenylalanyl-tRNA synthetase beta subunit family. Type 2 subfamily. Tetramer of two alpha and two beta subunits. Mg(2+) serves as cofactor.

The protein resides in the cytoplasm. The catalysed reaction is tRNA(Phe) + L-phenylalanine + ATP = L-phenylalanyl-tRNA(Phe) + AMP + diphosphate + H(+). This is Phenylalanine--tRNA ligase beta subunit from Natronomonas pharaonis (strain ATCC 35678 / DSM 2160 / CIP 103997 / JCM 8858 / NBRC 14720 / NCIMB 2260 / Gabara) (Halobacterium pharaonis).